A 1140-amino-acid polypeptide reads, in one-letter code: MWLKPEEVLLKNALKLWVTQKSSCYFILQRRRGHGEGGGRLTGRLVGALDAVLDSNARVAPFRILLQVPGSQVYSPIACGATLEEINQHWDWLEQNLLHTLSVFDNKDDIASFVKGKVKALIAEETSSRLAEQEEEPEKFREALVKFEARFNFPEAEKLVTYYSCCCWKGRVPRQGWLYLSINHLCFYSFFLGKELKLVVPWVDIQKLERTSNVFLTDTIRITTQNKERDFSMFLNLDEVFKVMEQLADVTLRRLLDNEVFDLDPDLQEPSQITKRDLEARAQNEFFRAFFRLPRKEKLHAVVDCSLWTPFSRCHTTGRMFASDSYICFASREDGCCKIILPLREVVSIEKMEDTSLLPHPIIVSIRSKVAFQFIELRDRDSLVEALLARLKQVHANHPVHYDTSADDDMASLVFHSTSMCSDHRFGDLEMMSSQNSEESEKEKSPLMHPDALVTAFQQSGSQSPDSRMSREQIKISLWNDHFVEYGRTVCMFRTEKIRKLVAMGIPESLRGRLWLLFSDAVTDLASHPGYYGNLVEESLGKCCLVTEEIERDLHRSLPEHPAFQNETGIAALRRVLTAYAHRNPKIGYCQSMNILTSVLLLYTKEEEAFWLLVAVCERMLPDYFNHRVIGAQVDQSVFEELIKGHLPELAEHMNDLSALASVSLSWFLTLFLSIMPLESAVNVVDCFFYDGIKAIFQLGLAVLEANAEDLCSSKDDGQALMILSRFLDHIKNEDSPGPPVGSHHAFFSDDQEPYPVTDISDLIRDSYEKFGDQSVEQIEHLRYKHRIRVLQGHEDTTKQNVLRVVIPEVSILPEDLEELYDLFKREHMMSCYWEQPRPMASRHDPSRPYAEQYRIDARQFAHLFQLVSPWTCGAHTEILAERTFRLLDDNMDQLIEFKAFVSCLDIMYNGEMNEKIKLLYRLHIPPALTENDRDSQSPLRNPLLSTSRPLVFGKPNGDAVDYQKQLKQMIKDLAKEKDKTEKELPKMSQREFIQFCKTLYSMFHEDPEENDLYQAIATVTTLLLQIGEVGQRGSSSGSCSQECGEELRASAPSPEDSVFADTGKTPQDSQAFPEAAERDWTVSLEHILASLLTEQSLVNFFEKPLDMKSKLENAKINQYNLKTFEMSHQSQSELKLSNL.

2 consecutive GRAM domains span residues 145–212 (VKFE…ERTS) and 285–353 (EFFR…EKME). One can recognise a Rab-GAP TBC domain in the interval 505 to 692 (GIPESLRGRL…NVVDCFFYDG (188 aa)). The interval 1031–1070 (GQRGSSSGSCSQECGEELRASAPSPEDSVFADTGKTPQDS) is disordered. Low complexity predominate over residues 1032-1043 (QRGSSSGSCSQE).

In terms of biological role, may act as a GTPase-activating protein for Rab family protein(s). This chain is TBC1 domain family member 8 (TBC1D8), found in Homo sapiens (Human).